The primary structure comprises 57 residues: UPF0391 membrane protein RPD_2934 (57 aa).

2 consecutive transmembrane segments (helical) span residues 6 to 26 and 35 to 55; these read WALI…TGVS and ILFY…FTIF.

It belongs to the UPF0391 family.

Its subcellular location is the cell membrane. The protein is UPF0391 membrane protein RPD_2934 of Rhodopseudomonas palustris (strain BisB5).